Here is a 92-residue protein sequence, read N- to C-terminus: Large ribosomal subunit protein bL25 (92 aa).

It belongs to the bacterial ribosomal protein bL25 family. As to quaternary structure, part of the 50S ribosomal subunit; part of the 5S rRNA/L5/L18/L25 subcomplex. Contacts the 5S rRNA. Binds to the 5S rRNA independently of L5 and L18.

This is one of the proteins that binds to the 5S RNA in the ribosome where it forms part of the central protuberance. The sequence is that of Large ribosomal subunit protein bL25 from Aliivibrio fischeri (strain MJ11) (Vibrio fischeri).